An 881-amino-acid chain; its full sequence is Beta-mannosidase (881 aa).

The N-terminal stretch at 1-18 (MHLHLLFLLALCGAGCMA) is a signal peptide. N-linked (GlcNAc...) asparagine glycosylation is found at N35, N77, N89, and N113. Cysteines 167 and 176 form a disulfide. 190–192 (WDW) contributes to the substrate binding site. N226, N297, and N302 each carry an N-linked (GlcNAc...) asparagine glycan. A substrate-binding site is contributed by N456. The Proton donor role is filled by E457. 3 cysteine pairs are disulfide-bonded: C540–C629, C732–C761, and C764–C769. E554 serves as the catalytic Nucleophile. N803 carries N-linked (GlcNAc...) asparagine glycosylation.

It belongs to the glycosyl hydrolase 2 family. In terms of assembly, monomer.

It localises to the lysosome. It catalyses the reaction Hydrolysis of terminal, non-reducing beta-D-mannose residues in beta-D-mannosides.. Its pathway is glycan metabolism; N-glycan degradation. Exoglycosidase that cleaves the single beta-linked mannose residue from the non-reducing end of all N-linked glycoprotein oligosaccharides. This is Beta-mannosidase from Rattus norvegicus (Rat).